Consider the following 165-residue polypeptide: Natriuretic peptide Na-NP (165 aa).

The first 25 residues, 1–25 (MVGLSRLAGGGLLLVLALLPLALDG), serve as a signal peptide directing secretion. Residues 26–83 (KPAPEALHKPPTGLRTSLAALRILGYLRPDSKQSRAARDRMLHPEQQVGGGGDSRPLQ) constitute a propeptide that is removed on maturation. Residues 56-68 (SKQSRAARDRMLH) are compositionally biased toward basic and acidic residues. Disordered stretches follow at residues 56-100 (SKQS…QKID) and 135-165 (PDSK…SRVI). Cysteine 94 and cysteine 110 are disulfide-bonded. Positions 129 to 165 (ILEYLRPDSKRSRATRDRMLHPEQQVGGGGGGGSRVI) are excised as a propeptide. The segment covering 135-149 (PDSKRSRATRDRMLH) has biased composition (basic and acidic residues). The segment covering 154 to 165 (VGGGGGGGSRVI) has biased composition (gly residues).

The protein belongs to the natriuretic peptide family. As to expression, expressed by the venom gland.

Its subcellular location is the secreted. Its function is as follows. Natriuretic peptide that dose-dependently induces the rapid relaxation of rat aortic strips phenylephrine-precontracted. Acts by stimulating cGMP production in a dose-dependent manner (by probably activating NPR1 and/or NPR2). May also show potent hypotensive effects. The sequence is that of Natriuretic peptide Na-NP from Naja atra (Chinese cobra).